A 180-amino-acid polypeptide reads, in one-letter code: Crossover junction endodeoxyribonuclease RuvC (180 aa).

Active-site residues include aspartate 7, glutamate 66, and aspartate 138. Residues aspartate 7, glutamate 66, and aspartate 138 each contribute to the Mg(2+) site.

Belongs to the RuvC family. As to quaternary structure, homodimer which binds Holliday junction (HJ) DNA. The HJ becomes 2-fold symmetrical on binding to RuvC with unstacked arms; it has a different conformation from HJ DNA in complex with RuvA. In the full resolvosome a probable DNA-RuvA(4)-RuvB(12)-RuvC(2) complex forms which resolves the HJ. Mg(2+) is required as a cofactor.

Its subcellular location is the cytoplasm. The enzyme catalyses Endonucleolytic cleavage at a junction such as a reciprocal single-stranded crossover between two homologous DNA duplexes (Holliday junction).. Its function is as follows. The RuvA-RuvB-RuvC complex processes Holliday junction (HJ) DNA during genetic recombination and DNA repair. Endonuclease that resolves HJ intermediates. Cleaves cruciform DNA by making single-stranded nicks across the HJ at symmetrical positions within the homologous arms, yielding a 5'-phosphate and a 3'-hydroxyl group; requires a central core of homology in the junction. The consensus cleavage sequence is 5'-(A/T)TT(C/G)-3'. Cleavage occurs on the 3'-side of the TT dinucleotide at the point of strand exchange. HJ branch migration catalyzed by RuvA-RuvB allows RuvC to scan DNA until it finds its consensus sequence, where it cleaves and resolves the cruciform DNA. This is Crossover junction endodeoxyribonuclease RuvC from Janthinobacterium sp. (strain Marseille) (Minibacterium massiliensis).